A 640-amino-acid polypeptide reads, in one-letter code: Paramyosin, short form (640 aa).

Nonhelical region regions lie at residues 1 to 122 (MALA…PDTV) and 420 to 640 (KLEQ…TITE). A coiled-coil region spans residues 123–619 (VERSRQRRRR…IIRAKHRTFV (497 aa)).

The protein belongs to the paramyosin family. Phosphorylated. As to expression, found in all adult muscle tissues except in indirect flight muscles and a set of temporary abdominal muscles. Not detected in larval muscle.

It localises to the cytoplasm. Its subcellular location is the myofibril. Functionally, paramyosin is a major structural component of many thick filaments isolated from invertebrate muscles. The polypeptide is Paramyosin, short form (Prm) (Drosophila melanogaster (Fruit fly)).